Here is a 132-residue protein sequence, read N- to C-terminus: Glycine cleavage system H protein (132 aa).

Positions 24–106 constitute a Lipoyl-binding domain; that stretch reads TVRVGLTDFA…YGAGWLLDVH (83 aa). An N6-lipoyllysine modification is found at lysine 65.

It belongs to the GcvH family. In terms of assembly, the glycine cleavage system is composed of four proteins: P, T, L and H. It depends on (R)-lipoate as a cofactor.

Functionally, the glycine cleavage system catalyzes the degradation of glycine. The H protein shuttles the methylamine group of glycine from the P protein to the T protein. This is Glycine cleavage system H protein from Mycobacterium leprae (strain Br4923).